The primary structure comprises 526 residues: D-arabinono-1,4-lactone oxidase (526 aa).

The 175-residue stretch at 22–196 (FWSRPSLYFQ…VYATLRTVPA (175 aa)) folds into the FAD-binding PCMH-type domain. Histidine 59 is modified (pros-8alpha-FAD histidine).

It belongs to the oxygen-dependent FAD-linked oxidoreductase family. FAD serves as cofactor.

It localises to the mitochondrion membrane. It carries out the reaction D-arabinono-1,4-lactone + O2 = dehydro-D-arabinono-1,4-lactone + H2O2 + H(+). The protein operates within cofactor biosynthesis; D-erythroascorbate biosynthesis; dehydro-D-arabinono-1,4-lactone from D-arabinose: step 2/2. This Yarrowia lipolytica (strain CLIB 122 / E 150) (Yeast) protein is D-arabinono-1,4-lactone oxidase (ALO1).